Reading from the N-terminus, the 507-residue chain is Pyridoxine 4-oxidase (507 aa).

His-448 functions as the Proton acceptor in the catalytic mechanism.

Belongs to the GMC oxidoreductase family. As to quaternary structure, monomer. FAD serves as cofactor.

The catalysed reaction is pyridoxine + O2 = pyridoxal + H2O2. It functions in the pathway cofactor degradation; B6 vitamer degradation; pyridoxal from pyridoxine (oxidase route): step 1/1. The chain is Pyridoxine 4-oxidase (pno) from Microbacterium luteolum (Aureobacterium luteolum).